Reading from the N-terminus, the 402-residue chain is Multidrug resistance protein MdtH (402 aa).

The Cytoplasmic segment spans residues 1–12 (MSRVSQARNLGK). A helical membrane pass occupies residues 13-33 (YFLLIDNMLVVLGFFVVFPLI). At 34–98 (SIRFVDQMGW…GFATMGIAHE (65 aa)) the chain is on the periplasmic side. The chain crosses the membrane as a helical span at residues 99–116 (PWLLWFSCLLSGLGGTLF). At 117–138 (DPPRSALVVKLIRPQQRCRFFS) the chain is on the cytoplasmic side. A helical membrane pass occupies residues 139 to 159 (LLMMQDSAGAVIGALLGSWLL). Residues 160–164 (QYDFR) lie on the Periplasmic side of the membrane. The helical transmembrane segment at 165–185 (LVCATGAVLFVLCAAFNAWLL) threads the bilayer. The Cytoplasmic portion of the chain corresponds to 186 to 213 (PAWKLSTVRTPVREGMTRVMRDKRFVTY). Residues 214–234 (VLTLAGYYMLAVQVMLMLPIM) form a helical membrane-spanning segment. The Periplasmic portion of the chain corresponds to 235 to 243 (VNDVAGAPS). A helical transmembrane segment spans residues 244–264 (AVKWMYAIEACLSLTLLYPIA). Residues 265-276 (RWSEKHFRLEHR) lie on the Cytoplasmic side of the membrane. Residues 277-297 (LMAGLLIMSLSMMPVGMVSGL) traverse the membrane as a helical segment. The Periplasmic segment spans residues 298–299 (QQ). The chain crosses the membrane as a helical span at residues 300–320 (LFTLICLFYIGSIIAEPARET). At 321-339 (LSALLADARARGSYMGFSR) the chain is on the cytoplasmic side. The helical transmembrane segment at 340–360 (LGLAIGGAIGYIGGGWLFDLG) threads the bilayer. Residues 361-367 (KSAHQPE) lie on the Periplasmic side of the membrane. A helical transmembrane segment spans residues 368–388 (LPWMMLGIIGIFTFLALGWQF). Topologically, residues 389–402 (SQKRATRRLLERDA) are cytoplasmic.

The protein belongs to the major facilitator superfamily. DHA1 family. MdtH (TC 2.A.1.2.21) subfamily.

The protein resides in the cell inner membrane. This chain is Multidrug resistance protein MdtH, found in Shigella sonnei (strain Ss046).